Consider the following 488-residue polypeptide: Transmembrane protein 39A-B (488 aa).

N-linked (GlcNAc...) asparagine glycosylation is found at asparagine 31 and asparagine 39. 3 consecutive transmembrane segments (helical) span residues 72-92 (GLVFEFLFFIYLLVTLFTQYI), 110-130 (TSLNFHLIDYHLAAFITVMLA), and 155-175 (LIIGRLVLLTLCGWIFCWTTV). Asparagine 180 carries N-linked (GlcNAc...) asparagine glycosylation. A helical membrane pass occupies residues 182–202 (SVLNLLFLGYPFGVYVPLCCF). N-linked (GlcNAc...) asparagine glycosylation occurs at asparagine 206. 4 helical membrane-spanning segments follow: residues 287 to 307 (EVLFNSLFSAYYVAFLPLCFV), 319 to 339 (CEHLIMVWINAFVMLSTQLLP), 420 to 440 (LLNLLLVIEGSLVLYQLYSLL), and 446 to 466 (NHTLSIALILFCNYYVLFKLL).

The protein belongs to the TMEM39 family.

The protein localises to the membrane. This chain is Transmembrane protein 39A-B (tmem39a-b), found in Xenopus laevis (African clawed frog).